We begin with the raw amino-acid sequence, 267 residues long: Dihydropteroate synthase (267 aa).

The 251-residue stretch at 1–251 (MTKTKIIGIL…NVDLNVKLAQ (251 aa)) folds into the Pterin-binding domain. A Mg(2+)-binding site is contributed by Asn-11. Residues Thr-51, Asp-84, Asn-103, Asp-167, Lys-203, and 239 to 241 (RVH) each bind (7,8-dihydropterin-6-yl)methyl diphosphate.

It belongs to the DHPS family. Mg(2+) serves as cofactor.

It carries out the reaction (7,8-dihydropterin-6-yl)methyl diphosphate + 4-aminobenzoate = 7,8-dihydropteroate + diphosphate. Its pathway is cofactor biosynthesis; tetrahydrofolate biosynthesis; 7,8-dihydrofolate from 2-amino-4-hydroxy-6-hydroxymethyl-7,8-dihydropteridine diphosphate and 4-aminobenzoate: step 1/2. Its function is as follows. Catalyzes the condensation of para-aminobenzoate (pABA) with 6-hydroxymethyl-7,8-dihydropterin diphosphate (DHPt-PP) to form 7,8-dihydropteroate (H2Pte), the immediate precursor of folate derivatives. This is Dihydropteroate synthase (folP) from Staphylococcus haemolyticus.